The primary structure comprises 459 residues: Vanillin aminotransferase (459 aa).

Residues glycine 115–serine 116 and aspartate 255 each bind pyridoxal 5'-phosphate. Lysine 284 is subject to N6-(pyridoxal phosphate)lysine. Phenylalanine 320–threonine 321 contributes to the pyridoxal 5'-phosphate binding site. Residues leucine 430–glutamine 457 are a coiled coil.

This sequence belongs to the class-III pyridoxal-phosphate-dependent aminotransferase family. As to expression, confined to the placenta of green fruits at high levels. Barely detectable in the pericarp and seeds as well as in the placenta of mature fruits.

It carries out the reaction vanillin + L-alanine = vanillylamine + pyruvate. It functions in the pathway aromatic compound metabolism; phenylpropanoid biosynthesis. Functionally, involved in the biosynthesis of capsaicinoids natural products, pungent alkaloids synthesized from phenylpropanoid intermediates in the placental tissue of chili pepper fruit acting as repellant on herbivorous mammals and conferring spiciness to hot peppers. Can transfer an amine from vanillylamine to pyruvate forming vanillin and L-alanine. In Capsicum annuum (Capsicum pepper), this protein is Vanillin aminotransferase.